Here is a 751-residue protein sequence, read N- to C-terminus: Autophagy-related protein 9 (751 aa).

Over 1 to 21 (MRKLCGNGSTSMISTDSYKNT) the chain is Cytoplasmic. A helical transmembrane segment spans residues 22 to 42 (TFFVIAFSTFLISCIDYTKLF). At 43–71 (SSLSTPEAVGRLEDVLIGQCITKGSFAHT) the chain is on the lumenal side. A helical transmembrane segment spans residues 72–92 (LFLIILSAFFIFQVANFAMSV). Topologically, residues 93–276 (PRLLDMYRFY…KDLVQGLRRR (184 aa)) are cytoplasmic. Residues 277–297 (FVFMGILNAIFAPFIILYLLI) lie within the membrane without spanning it. Residues 298–365 (YSFFRYFEEY…PKERTALVMR (68 aa)) lie on the Cytoplasmic side of the membrane. A helical transmembrane segment spans residues 366-386 (FVAFVAGSFAAVLLVASLIDP). At 387–398 (DLFLHFEITPHR) the chain is on the lumenal side. A helical transmembrane segment spans residues 399–419 (TVLFYLGVFGSVLAISRGMVP). The Cytoplasmic portion of the chain corresponds to 420-465 (QENMVFDPEASLNEVVRWTHYLPVEWRGQLHSQMVHQEFSKLFALK). An intramembrane segment occupies 466-486 (IMIFFSELLSVILTPFILFFS). Topologically, residues 487-751 (LPPCAAAIID…DDGVQIDIKQ (265 aa)) are cytoplasmic. Disordered regions lie at residues 528–584 (NRPE…DWRS) and 676–751 (AKSS…DIKQ). The span at 544–557 (DSGGGGGGGGGGFA) shows a compositional bias: gly residues. Positions 563–576 (RQTTRRAASASPSR) are enriched in polar residues. Composition is skewed to basic and acidic residues over residues 708 to 727 (EGDKGDDSIDGWSKRMKTDG) and 735 to 751 (EHGRLWKDDGVQIDIKQ).

The protein belongs to the ATG9 family. In terms of assembly, homotrimer; forms a homotrimer with a central pore that forms a path between the two membrane leaflets. Post-translationally, phosphorylated by ATG1. ATG1 phosphorylation is required for preautophagosome elongation.

Its subcellular location is the preautophagosomal structure membrane. It localises to the cytoplasmic vesicle membrane. The protein resides in the golgi apparatus membrane. It is found in the endoplasmic reticulum membrane. The enzyme catalyses a 1,2-diacyl-sn-glycero-3-phosphocholine(in) = a 1,2-diacyl-sn-glycero-3-phosphocholine(out). The catalysed reaction is a 1,2-diacyl-sn-glycero-3-phospho-L-serine(in) = a 1,2-diacyl-sn-glycero-3-phospho-L-serine(out). It carries out the reaction a 1,2-diacyl-sn-glycero-3-phosphoethanolamine(in) = a 1,2-diacyl-sn-glycero-3-phosphoethanolamine(out). It catalyses the reaction a 1,2-diacyl-sn-glycero-3-phospho-(1D-myo-inositol-3-phosphate)(in) = a 1,2-diacyl-sn-glycero-3-phospho-(1D-myo-inositol-3-phosphate)(out). In terms of biological role, phospholipid scramblase involved in autophagy and cytoplasm to vacuole transport (Cvt) vesicle formation. Cycles between the preautophagosomal structure/phagophore assembly site (PAS) and the cytoplasmic vesicle pool and supplies membrane for the growing autophagosome. Lipid scramblase activity plays a key role in preautophagosomal structure/phagophore assembly by distributing the phospholipids that arrive through ATG2 from the cytoplasmic to the luminal leaflet of the bilayer, thereby driving autophagosomal membrane expansion. Required for mitophagy. Also involved in endoplasmic reticulum-specific autophagic process and is essential for the survival of cells subjected to severe ER stress. Different machineries are required for anterograde trafficking to the PAS during either the Cvt pathway or bulk autophagy and for retrograde trafficking. The chain is Autophagy-related protein 9 (ATG9) from Cryptococcus gattii (Filobasidiella gattii).